The chain runs to 98 residues: uncharacterized protein (98 aa).

2 helical membrane-spanning segments follow: residues 8–28 and 73–93; these read LILK…HYFL and LWFI…SISL.

The protein localises to the membrane. This is an uncharacterized protein from Saccharomyces cerevisiae (strain ATCC 204508 / S288c) (Baker's yeast).